The sequence spans 413 residues: uncharacterized protein (413 aa).

Transmembrane regions (helical) follow at residues 10 to 32, 162 to 184, 189 to 211, 232 to 254, 259 to 276, 288 to 310, and 325 to 347; these read GLTI…GRLP, VFLH…LVFL, LLPR…AFLV, LSFR…LFFF, YSYS…ILLV, ALMV…SFVT, and FAYA…SLIL.

The protein localises to the cell membrane. This is an uncharacterized protein from Aquifex aeolicus (strain VF5).